Here is a 155-residue protein sequence, read N- to C-terminus: Protein archease-like (155 aa).

The Ca(2+) site is built by Asp-26, Asp-154, and Ile-155.

Belongs to the archease family.

In terms of biological role, component of the tRNA-splicing ligase complex required to facilitate the enzymatic turnover of catalytic subunit RtcB (F16A11.2). This is Protein archease-like from Caenorhabditis elegans.